Reading from the N-terminus, the 37-residue chain is Large ribosomal subunit protein bL36 (37 aa).

The protein belongs to the bacterial ribosomal protein bL36 family.

The protein is Large ribosomal subunit protein bL36 of Parasynechococcus marenigrum (strain WH8102).